Here is a 794-residue protein sequence, read N- to C-terminus: Protein SEY1 (794 aa).

Over 1 to 687 the chain is Cytoplasmic; sequence MMEVIDSVLG…KRSIIKTTTA (687 aa). Positions 43–272 constitute a GB1/RHD3-type G domain; that stretch reads GLDYHVISVF…ANPYYFKPQY (230 aa). 53–60 serves as a coordination point for GTP; the sequence is GSQSSGKS. A coiled-coil region spans residues 331–352; that stretch reads VDHILDDREKLGEVLKNLKQEC. The helical transmembrane segment at 688 to 708 threads the bilayer; sequence IPIWMYLLVVALGWNEFVMVL. The Lumenal segment spans residues 709-711; the sequence is RNP. A helical transmembrane segment spans residues 712 to 732; the sequence is LLVTLVLLFGVGFIFVNKFGL. Residues 733-794 are Cytoplasmic-facing; sequence WGPVLNVAHN…SDNEKIEKSE (62 aa). The segment at 770 to 794 is disordered; the sequence is NSAGKESYEMKDMSDSDNEKIEKSE. The segment covering 775–794 has biased composition (basic and acidic residues); sequence ESYEMKDMSDSDNEKIEKSE.

Belongs to the TRAFAC class dynamin-like GTPase superfamily. GB1/RHD3 GTPase family. RHD3 subfamily.

It localises to the endoplasmic reticulum membrane. In terms of biological role, cooperates with the reticulon proteins and tubule-shaping DP1 family proteins to generate and maintain the structure of the tubular endoplasmic reticulum network. Has GTPase activity, which is required for its function in ER organization. This is Protein SEY1 from Zygosaccharomyces rouxii (strain ATCC 2623 / CBS 732 / NBRC 1130 / NCYC 568 / NRRL Y-229).